Consider the following 244-residue polypeptide: Claudin-12 (244 aa).

The Cytoplasmic portion of the chain corresponds to 1–10; it reads MGCRDVHAAT. The chain crosses the membrane as a helical span at residues 11 to 31; it reads VLSFLCGIASVAGLFAGTLLP. Over 32–87 the chain is Extracellular; it reads NWRKLRLITFNRNEKNLTVYTGLWVKCARYDGSSDCLMYDTTWYSSVDQLDLRVLQ. A helical membrane pass occupies residues 88 to 108; sequence FALPLSMLIAMGALLLCLIGM. Residues 109-135 are Cytoplasmic-facing; sequence CNTAFRSSVPNIKLAKCLVNSAGCHLV. The helical transmembrane segment at 136 to 156 threads the bilayer; sequence AGLLFFLAGTVSLSPSIWVIF. Topologically, residues 157–174 are extracellular; it reads YNIHLNKKFEPVFSFDYA. A helical transmembrane segment spans residues 175 to 195; it reads VYVTIASAGGLFMTSLILFIW. Residues 196–244 lie on the Cytoplasmic side of the membrane; sequence YCTCKSLPSPFWQPLYSHPPSMHTYSQPYSARSRLSAIEIDIPVVSHTT. Phosphoserine occurs at positions 228 and 231.

It belongs to the claudin family. Interacts with OCLN.

It localises to the cell junction. The protein resides in the tight junction. It is found in the cell membrane. In terms of biological role, plays a major role in tight junction-specific obliteration of the intercellular space, through calcium-independent cell-adhesion activity. This chain is Claudin-12 (CLDN12), found in Pongo abelii (Sumatran orangutan).